Here is a 287-residue protein sequence, read N- to C-terminus: Glutamate racemase (287 aa).

The span at 1–15 (MATKPQDANTTSREA) shows a compositional bias: polar residues. Residues 1-25 (MATKPQDANTTSREAITSKADSPPR) form a disordered region. Substrate is bound by residues 32 to 33 (DS) and 64 to 65 (YG). Catalysis depends on C96, which acts as the Proton donor/acceptor. 97–98 (NT) contributes to the substrate binding site. The Proton donor/acceptor role is filled by C208. Position 209-210 (209-210 (TH)) interacts with substrate.

It belongs to the aspartate/glutamate racemases family.

It carries out the reaction L-glutamate = D-glutamate. The protein operates within cell wall biogenesis; peptidoglycan biosynthesis. Its function is as follows. Provides the (R)-glutamate required for cell wall biosynthesis. This is Glutamate racemase from Yersinia pseudotuberculosis serotype O:1b (strain IP 31758).